The sequence spans 271 residues: Type III pantothenate kinase (271 aa).

Position 6–13 (6–13) interacts with ATP; the sequence is DVRNTHTV. Residue 109–112 coordinates substrate; that stretch reads GADR. Aspartate 111 functions as the Proton acceptor in the catalytic mechanism. Residue aspartate 131 participates in K(+) binding. Serine 134 contributes to the ATP binding site. Threonine 186 serves as a coordination point for substrate.

Belongs to the type III pantothenate kinase family. Homodimer. NH4(+) is required as a cofactor. Requires K(+) as cofactor.

The protein localises to the cytoplasm. It catalyses the reaction (R)-pantothenate + ATP = (R)-4'-phosphopantothenate + ADP + H(+). Its pathway is cofactor biosynthesis; coenzyme A biosynthesis; CoA from (R)-pantothenate: step 1/5. In terms of biological role, catalyzes the phosphorylation of pantothenate (Pan), the first step in CoA biosynthesis. The polypeptide is Type III pantothenate kinase (Mycolicibacterium vanbaalenii (strain DSM 7251 / JCM 13017 / BCRC 16820 / KCTC 9966 / NRRL B-24157 / PYR-1) (Mycobacterium vanbaalenii)).